The chain runs to 335 residues: Beta-ketoacyl-[acyl-carrier-protein] synthase III (335 aa).

Residues Cys119 and His261 contribute to the active site. The interval 262–266 (QANQR) is ACP-binding. The active site involves Asn291.

The protein belongs to the thiolase-like superfamily. FabH family. As to quaternary structure, homodimer.

It is found in the cytoplasm. The catalysed reaction is malonyl-[ACP] + acetyl-CoA + H(+) = 3-oxobutanoyl-[ACP] + CO2 + CoA. It functions in the pathway lipid metabolism; fatty acid biosynthesis. Functionally, catalyzes the condensation reaction of fatty acid synthesis by the addition to an acyl acceptor of two carbons from malonyl-ACP. Catalyzes the first condensation reaction which initiates fatty acid synthesis and may therefore play a role in governing the total rate of fatty acid production. Possesses both acetoacetyl-ACP synthase and acetyl transacylase activities. Its substrate specificity determines the biosynthesis of branched-chain and/or straight-chain of fatty acids. The chain is Beta-ketoacyl-[acyl-carrier-protein] synthase III from Prochlorococcus marinus (strain MIT 9312).